Consider the following 346-residue polypeptide: Methylthioribose-1-phosphate isomerase (346 aa).

Residues 46–48, Arg89, and Gln196 each bind substrate; that span reads RGA. The active-site Proton donor is Asp237. 247–248 is a substrate binding site; sequence NK.

It belongs to the eIF-2B alpha/beta/delta subunits family. MtnA subfamily.

It carries out the reaction 5-(methylsulfanyl)-alpha-D-ribose 1-phosphate = 5-(methylsulfanyl)-D-ribulose 1-phosphate. Its pathway is amino-acid biosynthesis; L-methionine biosynthesis via salvage pathway; L-methionine from S-methyl-5-thio-alpha-D-ribose 1-phosphate: step 1/6. Functionally, catalyzes the interconversion of methylthioribose-1-phosphate (MTR-1-P) into methylthioribulose-1-phosphate (MTRu-1-P). This Geotalea uraniireducens (strain Rf4) (Geobacter uraniireducens) protein is Methylthioribose-1-phosphate isomerase.